The following is an 81-amino-acid chain: ATP synthase subunit c, chloroplastic (81 aa).

2 helical membrane-spanning segments follow: residues A7 to G27 and L57 to A77.

The protein belongs to the ATPase C chain family. In terms of assembly, F-type ATPases have 2 components, F(1) - the catalytic core - and F(0) - the membrane proton channel. F(1) has five subunits: alpha(3), beta(3), gamma(1), delta(1), epsilon(1). F(0) has four main subunits: a(1), b(1), b'(1) and c(10-14). The alpha and beta chains form an alternating ring which encloses part of the gamma chain. F(1) is attached to F(0) by a central stalk formed by the gamma and epsilon chains, while a peripheral stalk is formed by the delta, b and b' chains.

The protein resides in the plastid. The protein localises to the chloroplast thylakoid membrane. Functionally, f(1)F(0) ATP synthase produces ATP from ADP in the presence of a proton or sodium gradient. F-type ATPases consist of two structural domains, F(1) containing the extramembraneous catalytic core and F(0) containing the membrane proton channel, linked together by a central stalk and a peripheral stalk. During catalysis, ATP synthesis in the catalytic domain of F(1) is coupled via a rotary mechanism of the central stalk subunits to proton translocation. Its function is as follows. Key component of the F(0) channel; it plays a direct role in translocation across the membrane. A homomeric c-ring of between 10-14 subunits forms the central stalk rotor element with the F(1) delta and epsilon subunits. The polypeptide is ATP synthase subunit c, chloroplastic (Staurastrum punctulatum (Green alga)).